Here is an 88-residue protein sequence, read N- to C-terminus: Small ribosomal subunit protein uS19 (88 aa).

Belongs to the universal ribosomal protein uS19 family.

Functionally, protein S19 forms a complex with S13 that binds strongly to the 16S ribosomal RNA. The polypeptide is Small ribosomal subunit protein uS19 (Carsonella ruddii (strain PV)).